A 189-amino-acid chain; its full sequence is Adenylate kinase (189 aa).

10–15 (AAGKGT) lines the ATP pocket. Positions 30–59 (STGDMLRAARASGSELGQRVAKIMDEGGLV) are NMP. Residues Thr31, Arg36, 57 to 59 (GLV), 85 to 88 (GFPR), and Gln92 contribute to the AMP site. An LID region spans residues 126–136 (KRFEEQGRADD). Arg127 serves as a coordination point for ATP. Residues Arg133 and Arg144 each contribute to the AMP site. Gly172 is a binding site for ATP.

Belongs to the adenylate kinase family. As to quaternary structure, monomer.

The protein resides in the cytoplasm. It carries out the reaction AMP + ATP = 2 ADP. It functions in the pathway purine metabolism; AMP biosynthesis via salvage pathway; AMP from ADP: step 1/1. Functionally, catalyzes the reversible transfer of the terminal phosphate group between ATP and AMP. Plays an important role in cellular energy homeostasis and in adenine nucleotide metabolism. In Hyphomonas neptunium (strain ATCC 15444), this protein is Adenylate kinase.